We begin with the raw amino-acid sequence, 79 residues long: D-alanyl carrier protein (79 aa).

A Carrier domain is found at 2-79 (AEFKEQVLDI…MVIKKLEEIR (78 aa)). At Ser37 the chain carries O-(pantetheine 4'-phosphoryl)serine.

It belongs to the DltC family. Post-translationally, 4'-phosphopantetheine is transferred from CoA to a specific serine of apo-DCP.

It is found in the cytoplasm. It functions in the pathway cell wall biogenesis; lipoteichoic acid biosynthesis. Functionally, carrier protein involved in the D-alanylation of lipoteichoic acid (LTA). The loading of thioester-linked D-alanine onto DltC is catalyzed by D-alanine--D-alanyl carrier protein ligase DltA. The DltC-carried D-alanyl group is further transferred to cell membrane phosphatidylglycerol (PG) by forming an ester bond, probably catalyzed by DltD. D-alanylation of LTA plays an important role in modulating the properties of the cell wall in Gram-positive bacteria, influencing the net charge of the cell wall. The polypeptide is D-alanyl carrier protein (Bacillus anthracis (strain CDC 684 / NRRL 3495)).